An 89-amino-acid polypeptide reads, in one-letter code: Dynein light chain (89 aa).

The protein belongs to the dynein light chain family. In terms of tissue distribution, tegument.

The protein resides in the cytoplasm. The protein localises to the cytoskeleton. In terms of biological role, acts as a non-catalytic accessory component of a dynein complex. This Schistosoma mansoni (Blood fluke) protein is Dynein light chain (DLC).